The sequence spans 180 residues: Large ribosomal subunit protein uL5 (180 aa).

Belongs to the universal ribosomal protein uL5 family. Part of the 50S ribosomal subunit; part of the 5S rRNA/L5/L18/L25 subcomplex. Contacts the 5S rRNA and the P site tRNA. Forms a bridge to the 30S subunit in the 70S ribosome.

Functionally, this is one of the proteins that bind and probably mediate the attachment of the 5S RNA into the large ribosomal subunit, where it forms part of the central protuberance. In the 70S ribosome it contacts protein S13 of the 30S subunit (bridge B1b), connecting the 2 subunits; this bridge is implicated in subunit movement. Contacts the P site tRNA; the 5S rRNA and some of its associated proteins might help stabilize positioning of ribosome-bound tRNAs. This Heliobacterium modesticaldum (strain ATCC 51547 / Ice1) protein is Large ribosomal subunit protein uL5.